The primary structure comprises 278 residues: Serine/arginine-rich splicing factor SR34B (278 aa).

Residues 7–82 enclose the RRM 1 domain; that stretch reads RTIYVGNLPG…HHLRVELAHG (76 aa). Residues 81–91 show a composition bias toward basic and acidic residues; that stretch reads HGGRRSSHDAR. Disordered stretches follow at residues 81-121 and 192-263; these read HGGR…SEYR and EYDS…RSLS. Gly residues predominate over residues 95 to 107; it reads SGRGRGGRGGGDG. Basic and acidic residues-rich tracts occupy residues 108 to 120 and 192 to 201; these read GGRE…RSEY and EYDSRRDSRS. The RRM 2 domain maps to 120-195; it reads YRVVVSGLPS…EYVRVREYDS (76 aa). Phosphoserine is present on residues serine 201, serine 203, serine 225, serine 231, serine 233, serine 242, serine 250, serine 259, and serine 263. The span at 207–243 shows a compositional bias: basic residues; that stretch reads SYSKSRSRGRSPSRSRSRSRSRSKSRSPKAKSLRRSP.

It belongs to the splicing factor SR family. SR subfamily. Component of the spliceosome.

Its subcellular location is the nucleus speckle. It is found in the nucleus. The protein localises to the nucleoplasm. In terms of biological role, probably involved in intron recognition and spliceosome assembly. In Arabidopsis thaliana (Mouse-ear cress), this protein is Serine/arginine-rich splicing factor SR34B (SR34B).